We begin with the raw amino-acid sequence, 312 residues long: Ribonuclease HIII (312 aa).

In terms of domain architecture, RNase H type-2 spans 95-312; sequence MSILGSDEVG…TEKAFRLLKK (218 aa). Residues Asp-101, Glu-102, and Asp-206 each contribute to the a divalent metal cation site.

The protein belongs to the RNase HII family. RnhC subfamily. It depends on Mn(2+) as a cofactor. Mg(2+) is required as a cofactor.

The protein resides in the cytoplasm. The catalysed reaction is Endonucleolytic cleavage to 5'-phosphomonoester.. Its function is as follows. Endonuclease that specifically degrades the RNA of RNA-DNA hybrids. The chain is Ribonuclease HIII from Bacillus mycoides (strain KBAB4) (Bacillus weihenstephanensis).